The primary structure comprises 198 residues: Probable GTP-binding protein EngB (198 aa).

The EngB-type G domain occupies 36–198; sequence SDPQFAFIGR…NLSKLQELLE (163 aa). Residues 44-51, 70-74, 88-91, 155-158, and 182-184 each bind GTP; these read GRSNVGKS, GRTQL, DLPG, NKID, and ISA. Mg(2+)-binding residues include S51 and T72.

The protein belongs to the TRAFAC class TrmE-Era-EngA-EngB-Septin-like GTPase superfamily. EngB GTPase family. Mg(2+) is required as a cofactor.

Functionally, necessary for normal cell division and for the maintenance of normal septation. The chain is Probable GTP-binding protein EngB from Mesomycoplasma hyopneumoniae (strain J / ATCC 25934 / NCTC 10110) (Mycoplasma hyopneumoniae).